The sequence spans 459 residues: MKESRNLENFVEKKLYECKKKYVDIPKDEGQRYGGKHYEALTSKIFEILRKENPELDIIIAEFSLEGSVGMLKIAKPNEFDLVFKLKFPYYKSIAVTRDPKIPGNVLLDMTRVLELLKDDPREDFQRIRELIQGRLVDAQNFFVVDRLRSWLQSLFSQALNRISYRVELVAGVVSHLKYRTCGPAHTIYVYGDYEYSVDYVPAICLAAEQNVLPTKQLECFKRANTSYWEAIPKPLKPLTETSMISFRSSFYAVEKILLQDVHENCRNAIRFMKKFRDVKTNLGNCKSYYIKTLFLWKIIQEPESYWLNPLSFILADMFDDLAENLRRGVITFFWDPELNMIDALTRDQVWEMYLCVQRIPRDLRGAEISRNKWSFFVLREFSHKKERNVNLKCSSRRKRNVIKGLKTTSICKLRNARTNGTWTAGLWTRPGHAYRGPSETVSTWDTVKDAAWSEGIVE.

ATP-binding positions include Ser-68 and 79–81; that span reads EFD. 3 residues coordinate Mg(2+): Glu-79, Asp-81, and Asp-199. Residues Asp-199 and 248–255 each bind GTP; that span reads RSSFYAVE. 252-255 provides a ligand contact to ATP; that stretch reads YAVE. Zn(2+) is bound at residue His-263. ATP is bound by residues Lys-274 and 288–292; that span reads SYYIK.

It belongs to the mab-21 family. Mg(2+) is required as a cofactor. The cofactor is Mn(2+).

The catalysed reaction is GTP + ATP = 3',2'-cGAMP + 2 diphosphate. The enzyme catalyses GTP + ATP = 2',3'-cGAMP + 2 diphosphate. It carries out the reaction GTP + ATP = pppGp(2'-5')A + diphosphate. It catalyses the reaction pppA(2'-5')pG = 3',2'-cGAMP + diphosphate. The catalysed reaction is pppGp(2'-5')A = 2',3'-cGAMP + diphosphate. Its activity is regulated as follows. The enzyme activity is specifically activated by some nucleic acid. In terms of biological role, nucleotidyltransferase that catalyzes the formation of cyclic GMP-AMP from ATP and GTP and plays a key role in antiviral innate immunity. Directly binds some unknown nucleic acid, activating the nucleotidyltransferase activity, leading to synthesis of both 3',2'-cGAMP and 2',3'-cGAMP second messengers. 3',2'-cGAMP and 2',3'-cGAMP bind to and activate Sting, thereby triggering the antiviral immune response via activation of the NF-kappa-B transcription factor Rel (Relish). The polypeptide is Cyclic GMP-AMP synthase-like receptor 2 (Drosophila melanogaster (Fruit fly)).